The sequence spans 188 residues: uncharacterized protein (188 aa).

The signal sequence occupies residues 1-18 (MTLRIIAHLLALTASLAG). Cysteine 19 carries the N-palmitoyl cysteine lipid modification. Cysteine 19 carries the S-diacylglycerol cysteine lipid modification.

The protein localises to the cell membrane. This is an uncharacterized protein from Sinorhizobium fredii (strain NBRC 101917 / NGR234).